The primary structure comprises 178 residues: HTH-type transcriptional regulator SutR (178 aa).

Positions 12–66 constitute an HTH cro/C1-type domain; it reads LKQLRQQRGWSLSRLAEATGVSKAMLGQIERNESSPTVATLWKIATGLNVPFSTF. The segment at residues 23-42 is a DNA-binding region (H-T-H motif); sequence LSRLAEATGVSKAMLGQIER. In terms of domain architecture, Cupin type-2 spans 105 to 171; it reads QMASGAISES…GGEQTVHFHS (67 aa).

In terms of biological role, regulates the expression of 12-16 transcription units involved in various steps of sulfur utilization. Represses expression of pfkB, fliZ, cysE, ydcO and its own expression. Activates expression of ypfN. Acts by binding to SutR boxes. The chain is HTH-type transcriptional regulator SutR from Escherichia coli (strain K12).